Here is a 290-residue protein sequence, read N- to C-terminus: Protein-lysine methyltransferase METTL21E (290 aa).

S-adenosyl-L-methionine is bound by residues Trp-96, 124–126, Asp-145, Trp-176, and Ala-197; that span reads GAG.

This sequence belongs to the methyltransferase superfamily. METTL21 family.

Functionally, protein-lysine methyltransferase. This is Protein-lysine methyltransferase METTL21E (METTL21E) from Bos taurus (Bovine).